The chain runs to 45 residues: Major cold shock protein (45 aa).

Positions 1 to 45 (EKGFGFISTENGQDVFAHFSAIQTNGFKTLEEGQKVAFDVEEGQR) constitute a CSD domain.

Homodimer.

The protein resides in the cytoplasm. In Streptococcus pyogenes, this protein is Major cold shock protein (cspA).